The chain runs to 198 residues: MSTVLSVTKRETGHRSTLTQLRKGGAIPAVIYGYKLDSTPISISAKEFKKSIQKNGQNSVFSLDLEGKKVNVVVSEVQQCSLKDEVNHVDFLAINMAEELEVDVPIKLIGQSVGVSEGGILMQPNLELKVKVKPAELPDSIEVDISSLKVGESLTVAEIRHQTPVEIISEDDYLLVTIVAPVSAEQEEVSASVEEEQV.

It belongs to the bacterial ribosomal protein bL25 family. CTC subfamily. In terms of assembly, part of the 50S ribosomal subunit; part of the 5S rRNA/L5/L18/L25 subcomplex. Contacts the 5S rRNA. Binds to the 5S rRNA independently of L5 and L18.

Functionally, this is one of the proteins that binds to the 5S RNA in the ribosome where it forms part of the central protuberance. The chain is Large ribosomal subunit protein bL25 from Lysinibacillus sphaericus (strain C3-41).